The primary structure comprises 458 residues: ATP synthase subunit beta (458 aa).

G148–T155 is an ATP binding site.

This sequence belongs to the ATPase alpha/beta chains family. As to quaternary structure, F-type ATPases have 2 components, CF(1) - the catalytic core - and CF(0) - the membrane proton channel. CF(1) has five subunits: alpha(3), beta(3), gamma(1), delta(1), epsilon(1). CF(0) has three main subunits: a(1), b(2) and c(9-12). The alpha and beta chains form an alternating ring which encloses part of the gamma chain. CF(1) is attached to CF(0) by a central stalk formed by the gamma and epsilon chains, while a peripheral stalk is formed by the delta and b chains.

It localises to the cell inner membrane. It catalyses the reaction ATP + H2O + 4 H(+)(in) = ADP + phosphate + 5 H(+)(out). Functionally, produces ATP from ADP in the presence of a proton gradient across the membrane. The catalytic sites are hosted primarily by the beta subunits. This is ATP synthase subunit beta from Pseudomonas entomophila (strain L48).